Consider the following 1104-residue polypeptide: MAVNSKYHHSCINCGGLNTDERNERGLPCEVCLPEDSPSDIYRALLERKTLKEYRFYHEFWNEYEDFRSFFKKKFGKDLTGYQRLWAKRIVQGKSFTMVAPTGVGKTTFGMMTALWLARKGKKSALVFPTVTLVKQTLERLQKLADEKVKIFGFYSSMKKEEKEKFEKSFEEDDYHILVFSTQFVSKNREKLSQKRFDFVFVDDVDAVLKASRNIDTLLMMVGIPEEIIRKAFSTIKQGKIYERPKNLKPGILVVSSATAKPRGIRPLLFRDLLNFTVGRLVSVARNITHVRISSRSKEKLVELLEIFRDGILIFAQTEEEGKELYEYLKRFKFNVGETWSEFEKNFEDFKVGKINILIGVQAYYGKLTRGVDLPERIKYVIFWGTPSMRFSLELDKAPRFVLARVLKEMGLIKAQENPDVEELRKIAKEHLTQKEFVEKVKEMFRGVVVKDEDLELIIPDVYTYIQASGRSSRILNGVLVKGVSVIFEEDEEIFESLKTRLLLIAEEEIIEEAEANWKELVHEVEESRRRSERELTDTSRSLLIIVESPTKAETLSRFLGRASSRKERNIIVHEAVTGEGVILFTATRGHVYDLVTKGGIHGVEEENGKFVPVYNSLKRCRDCGYQFTEDRDECPVCSSKNIDDKTETLRALREISLEADEILVATDPDVEGEKISWDVTQYLLPSTRSLRRIEMHEITRYGFKKARESVRFVDFNLVKAQIVRRVQDRWIGFELSGKLQKRFGRSNLSAGRVQSTVLGWIVEREEEYKKSEKDFTLLVLENGVNLEVEGKIADDVVTVVELQEAEEEKNPLPPYTTSSALSEISQKLRLGVQEVMDILQDLFEKGFITYHRTDSTRISLEGQNVARTYLRKIGKEDIFMGRSWSTEGAHEAIRPVKPIDARELEEMIEEGLIADLTKKHLRVYELIFNRFLASQSAAVKVKKQIVTVDVDGKRMGIEQIVEILRDGWNLFVPLTVSPRFEHRTYKIKEKKFYKKHTVPLFTQASIVEEMKKRGIGRPSTYAKIVEVLFRRGYVYEDKYKRVRPTRFGVMVYSYLKERYEKYVTEETTRRLEEIMDKVERGEEDYQATLRLLYEEIKSLMEEG.

The RG N-terminal-type zinc finger occupies 1-39; the sequence is MAVNSKYHHSCINCGGLNTDERNERGLPCEVCLPEDSPS. Zn(2+) is bound by residues Cys-11, Cys-14, Cys-29, and Cys-32. ADP is bound by residues Phe-75, Asp-78, Gln-83, Gly-103, Gly-105, Lys-106, Thr-107, and Thr-108. ATP-binding positions include Gln-83 and 100 to 107; that span reads APTGVGKT. A Helicase ATP-binding domain is found at 87-242; sequence AKRIVQGKSF…FSTIKQGKIY (156 aa). The short motif at 203-206 is the DEAD box element; it reads DDVD. An insert region region spans residues 223 to 250; that stretch reads GIPEEIIRKAFSTIKQGKIYERPKNLKP. A Helicase C-terminal domain is found at 300–522; that stretch reads KLVELLEIFR…EAEANWKELV (223 aa). The tract at residues 390-460 is latch region; it reads RFSLELDKAP…KDEDLELIIP (71 aa). A topoisomerase I region spans residues 538-1104; it reads DTSRSLLIIV…EEIKSLMEEG (567 aa). A Toprim domain is found at 542–699; it reads SLLIIVESPT…SLRRIEMHEI (158 aa). Glu-548 is a binding site for Mg(2+). The RG C-terminal-type zinc finger occupies 618–645; sequence LKRCRDCGYQFTEDRDECPVCSSKNIDD. Zn(2+)-binding residues include Cys-621, Cys-624, Cys-635, and Cys-638. Mg(2+) is bound at residue Asp-668. Residues 715-1101 form the Topo IA-type catalytic domain; the sequence is DFNLVKAQIV…LLYEEIKSLM (387 aa). Tyr-851 acts as the O-(5'-phospho-DNA)-tyrosine intermediate in catalysis.

In the N-terminal section; belongs to the DEAD box helicase family. DDVD subfamily. The protein in the C-terminal section; belongs to the type IA topoisomerase family. As to quaternary structure, monomer. It depends on Zn(2+) as a cofactor. Requires Mg(2+) as cofactor.

It localises to the cytoplasm. The catalysed reaction is ATP + H2O = ADP + phosphate + H(+). Modifies the topological state of DNA by introducing positive supercoils in an ATP-dependent process. Increases the linking number in steps of +1. Probably recognizes regions with a low GC content which melt and form a ssDNA bubble, allowing the enzyme to bind and cleave the DNA prior to strand passage; the bubble is probably cleaved by 2 reverse gyrase molecules, one on each strand. Positively supercoils DNA with all NTPS, although it strongly prefers ATP. In the presence of non-hydrolyzable ATP analogs it partially relaxes negative supercoils. Has an intrinsic ATPase activity that is stimulated by DNA; ssDNA is most effective. Binds to single-stranded DNA, transiently cleaves and then rejoins the ends, introducing a positive supercoil in the process. The scissile phosphodiester is attacked by the catalytic tyrosine of the enzyme, resulting in the formation of a DNA-(5'-phosphotyrosyl)-enzyme intermediate. The helicase-like domain is a nucleotide-dependent switch that alternates between a physically closed ATP-bound state with a slight preference for dsDNA, and an open ADP-bound state with a high preference for ssDNA. Whole enzyme has a very poor (k-unwind=0.001 sec(-1)) non-processive helicase activity in the 3'-5' direction that works on short substrates, while the isolated helicase domain has a slightly better helicase activity that works in both directions. Probably involved in rewinding DNA strands in regions of the chromosome that have opened up to allow replication, transcription, DNA repair and/or for DNA protection. This Thermotoga maritima (strain ATCC 43589 / DSM 3109 / JCM 10099 / NBRC 100826 / MSB8) protein is Reverse gyrase.